Here is a 432-residue protein sequence, read N- to C-terminus: Trigger factor (432 aa).

In terms of domain architecture, PPIase FKBP-type spans 161–246; the sequence is EDRVTIDFTG…LKKVEERELP (86 aa).

Belongs to the FKBP-type PPIase family. Tig subfamily.

Its subcellular location is the cytoplasm. It catalyses the reaction [protein]-peptidylproline (omega=180) = [protein]-peptidylproline (omega=0). Functionally, involved in protein export. Acts as a chaperone by maintaining the newly synthesized protein in an open conformation. Functions as a peptidyl-prolyl cis-trans isomerase. This chain is Trigger factor, found in Salmonella typhi.